A 277-amino-acid polypeptide reads, in one-letter code: Shikimate dehydrogenase (NADP(+)) (277 aa).

Residues 19-21 and T66 contribute to the shikimate site; that span reads SKS. K70 acts as the Proton acceptor in catalysis. D82 serves as a coordination point for NADP(+). Shikimate contacts are provided by N91 and D107. NADP(+)-binding positions include 133–137, 157–162, and L222; these read GAGGA and NRTRAR. A shikimate-binding site is contributed by Y224. Residue G245 coordinates NADP(+).

This sequence belongs to the shikimate dehydrogenase family. As to quaternary structure, homodimer.

It catalyses the reaction shikimate + NADP(+) = 3-dehydroshikimate + NADPH + H(+). It participates in metabolic intermediate biosynthesis; chorismate biosynthesis; chorismate from D-erythrose 4-phosphate and phosphoenolpyruvate: step 4/7. Its function is as follows. Involved in the biosynthesis of the chorismate, which leads to the biosynthesis of aromatic amino acids. Catalyzes the reversible NADPH linked reduction of 3-dehydroshikimate (DHSA) to yield shikimate (SA). The polypeptide is Shikimate dehydrogenase (NADP(+)) (Roseobacter denitrificans (strain ATCC 33942 / OCh 114) (Erythrobacter sp. (strain OCh 114))).